Consider the following 403-residue polypeptide: Phosphopentomutase (403 aa).

The Mn(2+) site is built by aspartate 13, aspartate 298, histidine 303, aspartate 339, histidine 340, and histidine 351.

Belongs to the phosphopentomutase family. Requires Mn(2+) as cofactor.

It is found in the cytoplasm. It catalyses the reaction 2-deoxy-alpha-D-ribose 1-phosphate = 2-deoxy-D-ribose 5-phosphate. It carries out the reaction alpha-D-ribose 1-phosphate = D-ribose 5-phosphate. The protein operates within carbohydrate degradation; 2-deoxy-D-ribose 1-phosphate degradation; D-glyceraldehyde 3-phosphate and acetaldehyde from 2-deoxy-alpha-D-ribose 1-phosphate: step 1/2. Isomerase that catalyzes the conversion of deoxy-ribose 1-phosphate (dRib-1-P) and ribose 1-phosphate (Rib-1-P) to deoxy-ribose 5-phosphate (dRib-5-P) and ribose 5-phosphate (Rib-5-P), respectively. The sequence is that of Phosphopentomutase from Streptococcus gordonii (strain Challis / ATCC 35105 / BCRC 15272 / CH1 / DL1 / V288).